The chain runs to 338 residues: Lipoate-protein ligase A (338 aa).

The BPL/LPL catalytic domain maps to 29–216; that stretch reads PATQRVLFLW…AFFAHYGERI (188 aa). Residues Arg-71, 76 to 79, and Lys-134 each bind ATP; that span reads GAVF. Lys-134 provides a ligand contact to (R)-lipoate.

The protein belongs to the LplA family. Monomer.

The protein resides in the cytoplasm. It carries out the reaction L-lysyl-[lipoyl-carrier protein] + (R)-lipoate + ATP = N(6)-[(R)-lipoyl]-L-lysyl-[lipoyl-carrier protein] + AMP + diphosphate + H(+). Its pathway is protein modification; protein lipoylation via exogenous pathway; protein N(6)-(lipoyl)lysine from lipoate: step 1/2. The protein operates within protein modification; protein lipoylation via exogenous pathway; protein N(6)-(lipoyl)lysine from lipoate: step 2/2. In terms of biological role, catalyzes both the ATP-dependent activation of exogenously supplied lipoate to lipoyl-AMP and the transfer of the activated lipoyl onto the lipoyl domains of lipoate-dependent enzymes. This chain is Lipoate-protein ligase A, found in Salmonella paratyphi A (strain ATCC 9150 / SARB42).